The sequence spans 254 residues: Syntaxin-6 (254 aa).

The Cytoplasmic portion of the chain corresponds to 1–233 (MSMEDPFFVV…VSHMTSDRRQ (233 aa)). Residues 46-72 (TTNELRNNLRSIEWDLEDLDETISIVE) adopt a coiled-coil conformation. The interval 103-138 (KDQMSNSSMQALAERKNRQALLGESSSQSWSSGPDK) is disordered. The 63-residue stretch at 162–224 (QLIVEQQDEQ…DNVMKKLAKV (63 aa)) folds into the t-SNARE coiled-coil homology domain. A helical; Anchor for type IV membrane protein transmembrane segment spans residues 234-254 (WCAIIVLFVILLVVLVLFLVL).

The protein belongs to the syntaxin family.

The protein localises to the golgi apparatus membrane. The protein resides in the golgi apparatus. Its subcellular location is the trans-Golgi network membrane. It is found in the recycling endosome membrane. In terms of biological role, SNARE promoting movement of transport vesicles to target membranes. Targets endosomes to the trans-Golgi network, and may therefore function in retrograde trafficking. Together with SNARE STX12, promotes movement of vesicles from endosomes to the cell membrane, and may therefore function in the endocytic recycling pathway. In Gallus gallus (Chicken), this protein is Syntaxin-6 (STX6).